We begin with the raw amino-acid sequence, 287 residues long: Transcription cofactor vestigial-like protein 4 (287 aa).

Disordered stretches follow at residues 44 to 68 and 251 to 287; these read ASAL…SMEP and AAKD…SVVS. 2 positions are modified to phosphoserine: Ser58 and Ser271. Residues 275–287 are compositionally biased toward low complexity; it reads HMVSHSHSPSVVS.

It belongs to the vestigial family. As to quaternary structure, interacts with TEFs. Interacts with IRF2BP2.

The protein localises to the nucleus. May act as a specific coactivator for the mammalian TEFs. This chain is Transcription cofactor vestigial-like protein 4 (Vgll4), found in Mus musculus (Mouse).